The sequence spans 219 residues: Agamous-like MADS-box protein AGL19 (219 aa).

One can recognise an MADS-box domain in the interval 1–61 (MVRGKTEMKR…SKLYEFSSSS (61 aa)). The disordered stretch occupies residues 77 to 96 (GNNHKRNDNSQQARDETSGL). One can recognise a K-box domain in the interval 86–176 (SQQARDETSG…KEKWLGMGTA (91 aa)).

As to quaternary structure, interacts with SOC1 and AGL21. As to expression, mostly expressed in the outer layers of the root meristem (lateral root cap and epidermis) and in the central cylinder cells of mature roots. Also present in rosette leaves and seedlings and, to a lesser extent, in cauline leaves and flowers. Enriched in apices including the shoot apical meristem and developing leaf primordia.

It is found in the nucleus. Functionally, probable transcription factor that promotes flowering, especially in response to vernalization by short periods of cold, in an FLC-inpedendent manner. In Arabidopsis thaliana (Mouse-ear cress), this protein is Agamous-like MADS-box protein AGL19 (AGL19).